A 351-amino-acid polypeptide reads, in one-letter code: Uroporphyrinogen decarboxylase (351 aa).

Substrate-binding positions include 25–29, Asp74, Tyr151, Ser206, and His325; that span reads RQAGR.

This sequence belongs to the uroporphyrinogen decarboxylase family. In terms of assembly, homodimer.

It localises to the cytoplasm. The catalysed reaction is uroporphyrinogen III + 4 H(+) = coproporphyrinogen III + 4 CO2. It functions in the pathway porphyrin-containing compound metabolism; protoporphyrin-IX biosynthesis; coproporphyrinogen-III from 5-aminolevulinate: step 4/4. In terms of biological role, catalyzes the decarboxylation of four acetate groups of uroporphyrinogen-III to yield coproporphyrinogen-III. This is Uroporphyrinogen decarboxylase from Chlorobium luteolum (strain DSM 273 / BCRC 81028 / 2530) (Pelodictyon luteolum).